The primary structure comprises 284 residues: Type II methyltransferase M1.DpnII (284 aa).

Positions 17, 21, 46, 62, 177, 178, and 194 each coordinate S-adenosyl-L-methionine.

It belongs to the N(4)/N(6)-methyltransferase family. As to quaternary structure, monomer. Homodimer.

It carries out the reaction a 2'-deoxyadenosine in DNA + S-adenosyl-L-methionine = an N(6)-methyl-2'-deoxyadenosine in DNA + S-adenosyl-L-homocysteine + H(+). Functionally, an alpha subtype methylase that recognizes the double-stranded sequence 5'-GATC-3', methylates A-2 on both strands, and protects the DNA from cleavage by the DpnII endonuclease. The sequence is that of Type II methyltransferase M1.DpnII from Streptococcus pneumoniae.